We begin with the raw amino-acid sequence, 503 residues long: Maturase K (503 aa).

This sequence belongs to the intron maturase 2 family. MatK subfamily.

The protein localises to the plastid. It is found in the chloroplast. Usually encoded in the trnK tRNA gene intron. Probably assists in splicing its own and other chloroplast group II introns. The protein is Maturase K of Kunzea pulchella (Red kunzea).